A 57-amino-acid chain; its full sequence is Lantibiotic nisin-Z (57 aa).

Positions 1–23 (MSTKDFNLDLVSVSKKDSGASPR) are excised as a propeptide. A 2,3-didehydrobutyrine modification is found at T25. The segment at residues 26-30 (SISLC) is a cross-link (lanthionine (Ser-Cys)). S28 carries the post-translational modification 2,3-didehydroalanine (Ser). 4 cross-links (beta-methyllanthionine (Thr-Cys)) span residues 31-34 (TPGC), 36-42 (TGALMGC), 46-49 (TATC), and 48-51 (TCNC). The residue at position 56 (S56) is a 2,3-didehydroalanine (Ser).

Belongs to the type A lantibiotic family. In terms of processing, maturation of lantibiotics involves the enzymatic conversion of Thr, and Ser into dehydrated AA and the formation of thioether bonds with cysteine. This is followed by membrane translocation and cleavage of the modified precursor. Post-translationally, the structure of the 2,3-didehydrobutyrine is not discussed in PubMed:15361862. It is probably the Z-isomer by similarity.

In terms of biological role, lanthionine-containing peptide antibiotic (lantibiotic) active on Gram-positive bacteria. The bactericidal activity of lantibiotics is based on depolarization of energized bacterial cytoplasmic membranes, initiated by the formation of aqueous transmembrane pores. The protein is Lantibiotic nisin-Z (nisZ) of Lactococcus lactis subsp. lactis (Streptococcus lactis).